The chain runs to 335 residues: Biotin synthase (335 aa).

The Radical SAM core domain occupies 46-274 (YDIQLASLFS…KSKIRLSAGR (229 aa)). [4Fe-4S] cluster-binding residues include Cys-61, Cys-65, and Cys-68. [2Fe-2S] cluster is bound by residues Cys-105, Cys-137, Cys-197, and Arg-269.

It belongs to the radical SAM superfamily. Biotin synthase family. As to quaternary structure, homodimer. [4Fe-4S] cluster serves as cofactor. The cofactor is [2Fe-2S] cluster.

The enzyme catalyses (4R,5S)-dethiobiotin + (sulfur carrier)-SH + 2 reduced [2Fe-2S]-[ferredoxin] + 2 S-adenosyl-L-methionine = (sulfur carrier)-H + biotin + 2 5'-deoxyadenosine + 2 L-methionine + 2 oxidized [2Fe-2S]-[ferredoxin]. It functions in the pathway cofactor biosynthesis; biotin biosynthesis; biotin from 7,8-diaminononanoate: step 2/2. Its function is as follows. Catalyzes the conversion of dethiobiotin (DTB) to biotin by the insertion of a sulfur atom into dethiobiotin via a radical-based mechanism. This Prochlorococcus marinus (strain MIT 9215) protein is Biotin synthase.